The sequence spans 199 residues: Peptidyl-tRNA hydrolase (199 aa).

A tRNA-binding site is contributed by Y15. H20 serves as the catalytic Proton acceptor. Residues Y66, N68, and N114 each coordinate tRNA.

This sequence belongs to the PTH family. Monomer.

The protein localises to the cytoplasm. The enzyme catalyses an N-acyl-L-alpha-aminoacyl-tRNA + H2O = an N-acyl-L-amino acid + a tRNA + H(+). Hydrolyzes ribosome-free peptidyl-tRNAs (with 1 or more amino acids incorporated), which drop off the ribosome during protein synthesis, or as a result of ribosome stalling. Functionally, catalyzes the release of premature peptidyl moieties from peptidyl-tRNA molecules trapped in stalled 50S ribosomal subunits, and thus maintains levels of free tRNAs and 50S ribosomes. The protein is Peptidyl-tRNA hydrolase of Burkholderia cenocepacia (strain HI2424).